Reading from the N-terminus, the 266-residue chain is Phosphatidylglycerol--prolipoprotein diacylglyceryl transferase (266 aa).

7 helical membrane passes run 17–37 (LKIHWYGLMYLIGIGGAWLLA), 56–76 (LVFWVACGVILGGRLGYVLFY), 92–112 (WKGGMSFHGGLLGVMLAVWWF), 120–140 (FFQLMDFIAPLVPIGLGAGRI), 171–191 (PSQLYQFALEGVALFVILWLF), 199–219 (ASVSGLFVLCYGIFRFVVEFV), and 233–253 (WLTMGQVLCVPMVLAGIALMV). Arginine 139 serves as a coordination point for a 1,2-diacyl-sn-glycero-3-phospho-(1'-sn-glycerol).

This sequence belongs to the Lgt family.

It is found in the cell inner membrane. The enzyme catalyses L-cysteinyl-[prolipoprotein] + a 1,2-diacyl-sn-glycero-3-phospho-(1'-sn-glycerol) = an S-1,2-diacyl-sn-glyceryl-L-cysteinyl-[prolipoprotein] + sn-glycerol 1-phosphate + H(+). The protein operates within protein modification; lipoprotein biosynthesis (diacylglyceryl transfer). Catalyzes the transfer of the diacylglyceryl group from phosphatidylglycerol to the sulfhydryl group of the N-terminal cysteine of a prolipoprotein, the first step in the formation of mature lipoproteins. In Pseudomonas aeruginosa (strain UCBPP-PA14), this protein is Phosphatidylglycerol--prolipoprotein diacylglyceryl transferase.